Here is a 172-residue protein sequence, read N- to C-terminus: Trypsin inhibitor DE-3 (172 aa).

2 disulfide bridges follow: C39/C83 and C132/C139.

The protein belongs to the protease inhibitor I3 (leguminous Kunitz-type inhibitor) family.

Inhibition of trypsin. The chain is Trypsin inhibitor DE-3 from Erythrina caffra (Kaffir tree).